The following is a 113-amino-acid chain: U11-theraphotoxin-Hhn1a (113 aa).

The N-terminal stretch at 1–21 (MNTVRVAFLLVFVLAVSLGQA) is a signal peptide. A propeptide spanning residues 22 to 74 (DKDENRMEMQEKTEQGKSYLDFAENLLLQKLEEPEAKLLEEDSEESRNSRQKR) is cleaved from the precursor. The span at 58 to 69 (KLLEEDSEESRN) shows a compositional bias: basic and acidic residues. Residues 58–83 (KLLEEDSEESRNSRQKRCIGEGVPCD) are disordered. Cystine bridges form between C75–C90, C82–C95, and C89–C110.

This sequence belongs to the neurotoxin 14 (magi-1) family. 01 (HNTX-16) subfamily. In terms of tissue distribution, expressed by the venom gland.

It is found in the secreted. In terms of biological role, probable ion channel inhibitor. The sequence is that of U11-theraphotoxin-Hhn1a from Cyriopagopus hainanus (Chinese bird spider).